We begin with the raw amino-acid sequence, 30 residues long: Chassatide C9 (30 aa).

Residues 1 to 30 (GIPCGESCVFIPCVTTVIGCSCKDKVCYNN) constitute a cross-link (cyclopeptide (Gly-Asn)). 3 disulfides stabilise this stretch: cysteine 4/cysteine 20, cysteine 8/cysteine 22, and cysteine 13/cysteine 27.

In terms of processing, this is a cyclic peptide.

In terms of biological role, probably participates in a plant defense mechanism. The protein is Chassatide C9 of Chassalia chartacea (Chassalia curviflora).